Here is a 145-residue protein sequence, read N- to C-terminus: 3-hydroxyacyl-[acyl-carrier-protein] dehydratase FabZ (145 aa).

Residue His47 is part of the active site.

It belongs to the thioester dehydratase family. FabZ subfamily.

The protein resides in the cytoplasm. It catalyses the reaction a (3R)-hydroxyacyl-[ACP] = a (2E)-enoyl-[ACP] + H2O. In terms of biological role, involved in unsaturated fatty acids biosynthesis. Catalyzes the dehydration of short chain beta-hydroxyacyl-ACPs and long chain saturated and unsaturated beta-hydroxyacyl-ACPs. This is 3-hydroxyacyl-[acyl-carrier-protein] dehydratase FabZ from Geotalea uraniireducens (strain Rf4) (Geobacter uraniireducens).